Here is a 98-residue protein sequence, read N- to C-terminus: Defensin (98 aa).

The first 19 residues, 1-19 (MRTFLVTFVLVVVVGVISA), serve as a signal peptide directing secretion. Residues 20–58 (YPSNPVEVEAEDFDAQDPDLQTFQDTFYEVPQVHSRQKR) constitute a propeptide that is removed on maturation. Disulfide bonds link Cys-61/Cys-88, Cys-74/Cys-94, and Cys-78/Cys-96.

Is synthesized by the fat body and eventually secreted into the hemolymph.

It is found in the secreted. Functionally, has antiparasitic activity against promastigote forms of L.major, and antibacterial activity against Gram-positive bacterium S.aureus. Has antifungal activity against the yeasts C.albicans and S.cerevisiae, but not C.glabrata. Has antifungal activity against filamentous fungi A.fumigatus, F.culmorum, F.oxysporum, N.crassa, T.viride and T.mentagrophytes, but not B.bassiana. The chain is Defensin from Phlebotomus duboscqi (Sandfly).